The sequence spans 180 residues: Translation initiation factor IF-3 (180 aa).

The protein belongs to the IF-3 family. In terms of assembly, monomer.

The protein localises to the cytoplasm. In terms of biological role, IF-3 binds to the 30S ribosomal subunit and shifts the equilibrium between 70S ribosomes and their 50S and 30S subunits in favor of the free subunits, thus enhancing the availability of 30S subunits on which protein synthesis initiation begins. The chain is Translation initiation factor IF-3 from Pectobacterium atrosepticum (strain SCRI 1043 / ATCC BAA-672) (Erwinia carotovora subsp. atroseptica).